The sequence spans 418 residues: Tyrosine--tRNA ligase (418 aa).

Y34 provides a ligand contact to L-tyrosine. Residues 39–48 carry the 'HIGH' region motif; sequence PTADSLHLGH. Positions 169 and 173 each coordinate L-tyrosine. Positions 229–233 match the 'KMSKS' region motif; that stretch reads KFGKS. K232 provides a ligand contact to ATP. The S4 RNA-binding domain occupies 352–418; it reads LNIVDLLVTA…GKKKYFVLTY (67 aa).

It belongs to the class-I aminoacyl-tRNA synthetase family. TyrS type 1 subfamily. Homodimer.

The protein resides in the cytoplasm. It carries out the reaction tRNA(Tyr) + L-tyrosine + ATP = L-tyrosyl-tRNA(Tyr) + AMP + diphosphate + H(+). Functionally, catalyzes the attachment of tyrosine to tRNA(Tyr) in a two-step reaction: tyrosine is first activated by ATP to form Tyr-AMP and then transferred to the acceptor end of tRNA(Tyr). The sequence is that of Tyrosine--tRNA ligase from Streptococcus gordonii (strain Challis / ATCC 35105 / BCRC 15272 / CH1 / DL1 / V288).